A 146-amino-acid polypeptide reads, in one-letter code: Coactosin (146 aa).

Positions M1–R132 constitute an ADF-H domain.

Belongs to the actin-binding proteins ADF family. Coactosin subfamily. Post-translationally, the N-terminus is blocked.

It localises to the cytoplasm. The protein localises to the cytoskeleton. In terms of biological role, binds to F-actin in a calcium independent manner. Binds to the filaments along their length. This Dictyostelium discoideum (Social amoeba) protein is Coactosin (coaA).